The following is a 425-amino-acid chain: Raffinose permease (425 aa).

Topologically, residues 1 to 11 are cytoplasmic; sequence MNSASTHKNTD. A helical membrane pass occupies residues 12–32; sequence FWIFGLFFFLYFFIMATCFPF. The Periplasmic segment spans residues 33-48; that stretch reads LPVWLSDVVGLSKTDT. The helical transmembrane segment at 49 to 69 threads the bilayer; sequence GIVFSCLSLFAISFQPLLGVI. The Cytoplasmic portion of the chain corresponds to 70 to 78; the sequence is SDRLGLKKN. Residues 79–99 form a helical membrane-spanning segment; the sequence is LIWSISLLLVFFAPFFLYVFA. Topologically, residues 100 to 105 are periplasmic; sequence PLLHLN. Residues 106–126 form a helical membrane-spanning segment; the sequence is IWAGALTGGVFIGFVFSAGAG. Residues 127–147 lie on the Cytoplasmic side of the membrane; it reads AIEAYIERVSRSSGFEYGKAR. The helical transmembrane segment at 148 to 168 threads the bilayer; the sequence is MFGCLGWALCATMAGILFNVD. A topological domain (periplasmic) is located at residue Pro169. A helical transmembrane segment spans residues 170 to 190; it reads SLVFWMGSGGALLLLLLLYLA. Residues 191–229 are Cytoplasmic-facing; that stretch reads RPSTSQTAMVMNALGANSSLISTRMVFSLFRMRQMWMFV. The helical transmembrane segment at 230 to 250 threads the bilayer; the sequence is LYTIGVACVYDVFDQQFAIFF. Residues 251-265 lie on the Periplasmic side of the membrane; the sequence is RSFFDTPQAGIKAFG. The chain crosses the membrane as a helical span at residues 266–286; that stretch reads FATTAGEICNAIIMFCTPWII. Topologically, residues 287 to 294 are cytoplasmic; that stretch reads NRIGAKNT. The helical transmembrane segment at 295-315 threads the bilayer; it reads LLVAGGIMTIRITGSAFATTM. Residue Thr316 is a topological domain, periplasmic. Residues 317–337 traverse the membrane as a helical segment; it reads EVVILKMLHALEVPFLLVGAF. The Cytoplasmic portion of the chain corresponds to 338–351; sequence KYITGVFDTRLSAT. The chain crosses the membrane as a helical span at residues 352-372; sequence VYLIGFQFSKQLAAILLSTFA. Topologically, residues 373–383 are periplasmic; it reads GHLYDRMGFQN. A helical transmembrane segment spans residues 384–404; that stretch reads TYFVLGMIVLTVTVISAFTLS. At 405-425 the chain is on the cytoplasmic side; the sequence is SSPGIVHPSVEKAPVAHSEIN.

It belongs to the major facilitator superfamily. Oligosaccharide:H(+) symporter (OHS) (TC 2.A.1.5) family. In terms of assembly, monomer.

The protein localises to the cell inner membrane. Responsible for transport of raffinose into the cell. Can also transport lactose and melibiose. Has weak activity with maltose. In Escherichia coli, this protein is Raffinose permease.